Here is a 181-residue protein sequence, read N- to C-terminus: Large ribosomal subunit protein uL5 (181 aa).

This sequence belongs to the universal ribosomal protein uL5 family. As to quaternary structure, part of the 50S ribosomal subunit; part of the 5S rRNA/L5/L18/L25 subcomplex. Contacts the 5S rRNA and the P site tRNA. Forms a bridge to the 30S subunit in the 70S ribosome.

Functionally, this is one of the proteins that bind and probably mediate the attachment of the 5S RNA into the large ribosomal subunit, where it forms part of the central protuberance. In the 70S ribosome it contacts protein S13 of the 30S subunit (bridge B1b), connecting the 2 subunits; this bridge is implicated in subunit movement. Contacts the P site tRNA; the 5S rRNA and some of its associated proteins might help stabilize positioning of ribosome-bound tRNAs. The protein is Large ribosomal subunit protein uL5 of Sulfurimonas denitrificans (strain ATCC 33889 / DSM 1251) (Thiomicrospira denitrificans (strain ATCC 33889 / DSM 1251)).